A 357-amino-acid polypeptide reads, in one-letter code: Protein RecA (357 aa).

Residue 71-78 (GPESSGKT) coordinates ATP.

It belongs to the RecA family.

The protein localises to the cytoplasm. Functionally, can catalyze the hydrolysis of ATP in the presence of single-stranded DNA, the ATP-dependent uptake of single-stranded DNA by duplex DNA, and the ATP-dependent hybridization of homologous single-stranded DNAs. It interacts with LexA causing its activation and leading to its autocatalytic cleavage. The polypeptide is Protein RecA (Ehrlichia chaffeensis (strain ATCC CRL-10679 / Arkansas)).